Reading from the N-terminus, the 405-residue chain is Argininosuccinate synthase (405 aa).

Residues 10–18 and A37 contribute to the ATP site; that span reads AYSGGLDTS. Residues Y88 and S93 each contribute to the L-citrulline site. G118 is an ATP binding site. Positions 120, 124, and 125 each coordinate L-aspartate. N124 is a binding site for L-citrulline. L-citrulline is bound by residues R128, S179, S188, E264, and Y276.

The protein belongs to the argininosuccinate synthase family. Type 1 subfamily. In terms of assembly, homotetramer.

It localises to the cytoplasm. The catalysed reaction is L-citrulline + L-aspartate + ATP = 2-(N(omega)-L-arginino)succinate + AMP + diphosphate + H(+). Its pathway is amino-acid biosynthesis; L-arginine biosynthesis; L-arginine from L-ornithine and carbamoyl phosphate: step 2/3. The protein is Argininosuccinate synthase of Stutzerimonas stutzeri (strain A1501) (Pseudomonas stutzeri).